Reading from the N-terminus, the 224-residue chain is 7-cyano-7-deazaguanine synthase (224 aa).

An ATP-binding site is contributed by 10 to 20 (LSGGLDSATVV). Zn(2+)-binding residues include cysteine 189, cysteine 199, cysteine 202, and cysteine 205.

It belongs to the QueC family. Requires Zn(2+) as cofactor.

The enzyme catalyses 7-carboxy-7-deazaguanine + NH4(+) + ATP = 7-cyano-7-deazaguanine + ADP + phosphate + H2O + H(+). Its pathway is purine metabolism; 7-cyano-7-deazaguanine biosynthesis. Functionally, catalyzes the ATP-dependent conversion of 7-carboxy-7-deazaguanine (CDG) to 7-cyano-7-deazaguanine (preQ(0)). This chain is 7-cyano-7-deazaguanine synthase, found in Stutzerimonas stutzeri (strain A1501) (Pseudomonas stutzeri).